Consider the following 313-residue polypeptide: Glutathione synthetase (313 aa).

The 185-residue stretch at 125–309 (KIFVTEFADL…IASLFWDAVE (185 aa)) folds into the ATP-grasp domain. 151–207 (RKEFGDIIVKPLYGNGGAGIFHLHEADRNLASLLEMFGQLFREPYIVQRYLKDVRKG) lines the ATP pocket. Residues Glu280 and Asn282 each coordinate Mg(2+).

Belongs to the prokaryotic GSH synthase family. Mg(2+) serves as cofactor. Requires Mn(2+) as cofactor.

The enzyme catalyses gamma-L-glutamyl-L-cysteine + glycine + ATP = glutathione + ADP + phosphate + H(+). Its pathway is sulfur metabolism; glutathione biosynthesis; glutathione from L-cysteine and L-glutamate: step 2/2. The polypeptide is Glutathione synthetase (Mesorhizobium japonicum (strain LMG 29417 / CECT 9101 / MAFF 303099) (Mesorhizobium loti (strain MAFF 303099))).